We begin with the raw amino-acid sequence, 241 residues long: Probable xyloglucan-specific endo-beta-1,4-glucanase A (241 aa).

Positions 1–15 are cleaved as a signal peptide; the sequence is MKVLALSALLSLASA. The N-linked (GlcNAc...) asparagine glycan is linked to N47.

The protein belongs to the glycosyl hydrolase 12 (cellulase H) family.

It localises to the secreted. It carries out the reaction xyloglucan + H2O = xyloglucan oligosaccharides.. Its function is as follows. Catalyzes endohydrolysis of 1,4-beta-D-glucosidic linkages in xyloglucan with retention of the beta-configuration of the glycosyl residues. Specific for xyloglucan and does not hydrolyze other cell wall components. The polypeptide is Probable xyloglucan-specific endo-beta-1,4-glucanase A (xgeA) (Aspergillus niger (strain ATCC MYA-4892 / CBS 513.88 / FGSC A1513)).